Here is a 294-residue protein sequence, read N- to C-terminus: Cytidine deaminase (294 aa).

2 CMP/dCMP-type deaminase domains span residues Asp-48 to Lys-168 and Leu-186 to Ala-294. Position 89 to 91 (Asn-89 to Glu-91) interacts with substrate. His-102 provides a ligand contact to Zn(2+). Catalysis depends on Glu-104, which acts as the Proton donor. Residues Cys-129 and Cys-132 each contribute to the Zn(2+) site.

It belongs to the cytidine and deoxycytidylate deaminase family. Homodimer. Zn(2+) is required as a cofactor.

The catalysed reaction is cytidine + H2O + H(+) = uridine + NH4(+). The enzyme catalyses 2'-deoxycytidine + H2O + H(+) = 2'-deoxyuridine + NH4(+). In terms of biological role, this enzyme scavenges exogenous and endogenous cytidine and 2'-deoxycytidine for UMP synthesis. The polypeptide is Cytidine deaminase (Escherichia coli (strain K12)).